The following is a 692-amino-acid chain: Elongation factor G (692 aa).

A tr-type G domain is found at 8-282; sequence EKTRNIGIMA…AVLDYLPAPT (275 aa). Residues 17-24, 81-85, and 135-138 contribute to the GTP site; these read AHIDAGKT, DTPGH, and NKMD.

This sequence belongs to the TRAFAC class translation factor GTPase superfamily. Classic translation factor GTPase family. EF-G/EF-2 subfamily.

The protein localises to the cytoplasm. Functionally, catalyzes the GTP-dependent ribosomal translocation step during translation elongation. During this step, the ribosome changes from the pre-translocational (PRE) to the post-translocational (POST) state as the newly formed A-site-bound peptidyl-tRNA and P-site-bound deacylated tRNA move to the P and E sites, respectively. Catalyzes the coordinated movement of the two tRNA molecules, the mRNA and conformational changes in the ribosome. The polypeptide is Elongation factor G (Bacillus licheniformis (strain ATCC 14580 / DSM 13 / JCM 2505 / CCUG 7422 / NBRC 12200 / NCIMB 9375 / NCTC 10341 / NRRL NRS-1264 / Gibson 46)).